The chain runs to 381 residues: Na(+)/H(+) antiporter NhaA 1 (381 aa).

Helical transmembrane passes span 18–38 (GLLLLFVTVISLWAANSSYSA), 53–73 (ITHWINDGLMTIFFLLIGLEL), 89–109 (SLPIMAAFGGMLIPAATFLAL), 118–138 (GAGIPMATDIAFAIGILSLLG), 147–167 (VFLTALAVIDDLGAIIVIAVF), 170–190 (TSIGFVNLAIALGIWVFLFVL), 210–230 (YFMLNSGIHATITGVILAFVI), 251–271 (PVAFFILPLFAIANTCIAIES), 283–303 (FGIILGLVIGKPLGILLFSSI), 321–341 (ILGAGMLGGIGFTMSIFITLL), and 348–368 (IIVFSKIAIIIASIISGITGF).

Belongs to the NhaA Na(+)/H(+) (TC 2.A.33) antiporter family.

Its subcellular location is the cell inner membrane. The enzyme catalyses Na(+)(in) + 2 H(+)(out) = Na(+)(out) + 2 H(+)(in). In terms of biological role, na(+)/H(+) antiporter that extrudes sodium in exchange for external protons. This chain is Na(+)/H(+) antiporter NhaA 1, found in Flavobacterium johnsoniae (strain ATCC 17061 / DSM 2064 / JCM 8514 / BCRC 14874 / CCUG 350202 / NBRC 14942 / NCIMB 11054 / UW101) (Cytophaga johnsonae).